A 224-amino-acid polypeptide reads, in one-letter code: Lipoprotein-releasing system ATP-binding protein LolD (224 aa).

The region spanning 6-224 (LEFCNVSKFF…IVNHSLISSI (219 aa)) is the ABC transporter domain. Position 43 to 50 (43 to 50 (GASGVGKT)) interacts with ATP.

It belongs to the ABC transporter superfamily. Lipoprotein translocase (TC 3.A.1.125) family. In terms of assembly, the complex is composed of two ATP-binding proteins (LolD) and two transmembrane proteins (LolC and LolE).

The protein localises to the cell inner membrane. Functionally, part of the ABC transporter complex LolCDE involved in the translocation of mature outer membrane-directed lipoproteins, from the inner membrane to the periplasmic chaperone, LolA. Responsible for the formation of the LolA-lipoprotein complex in an ATP-dependent manner. The sequence is that of Lipoprotein-releasing system ATP-binding protein LolD from Neorickettsia sennetsu (strain ATCC VR-367 / Miyayama) (Ehrlichia sennetsu).